The sequence spans 1008 residues: Ubiquitin carboxyl-terminal hydrolase 16 (1008 aa).

A helical transmembrane segment spans residues 7–27; it reads LGISSLVLVVSLVLPLIGLFV. The Zn(2+) site is built by C74, C77, C85, C88, C94, C98, H107, and C111. The MYND-type zinc-finger motif lies at 74–111; that stretch reads CPVCYCLATTRCSRCKAVRYCSGKCQIIHWRQGHKDEC. 5 disordered regions span residues 122-149, 159-178, 187-233, 275-309, and 326-379; these read DESD…GPEP, LSNR…DNKD, VSVA…LDAH, SVHK…DPSL, and SDSC…YISD. Positions 193–203 are enriched in low complexity; that stretch reads SGSSFSGFSSS. Over residues 222-233 the composition is skewed to basic and acidic residues; sequence ESERSESLLDAH. Positions 284 to 295 are enriched in polar residues; the sequence is GQNQSQSRSLHS. The segment covering 340–351 has biased composition (low complexity); the sequence is SSLHFSFGSGSS. The USP domain maps to 542 to 847; that stretch reads CGLINVGNSC…GAYMLFYARC (306 aa). C551 acts as the Nucleophile in catalysis. H807 (proton acceptor) is an active-site residue. Disordered stretches follow at residues 859 to 905 and 952 to 1008; these read KTEA…GNIQ and FIFG…GGER. Low complexity-rich tracts occupy residues 878 to 888 and 965 to 992; these read STISRSVSTSS and SETP…RSSP.

It belongs to the peptidase C19 family. Interacts with SHM1 and SHM4. Interacts with HIPP27. In terms of tissue distribution, expressed in flowers, siliques, rosette leaves, cauline leaves, stems and at a lower level in roots. In roots, expressed in the sieve elements.

It localises to the membrane. The enzyme catalyses Thiol-dependent hydrolysis of ester, thioester, amide, peptide and isopeptide bonds formed by the C-terminal Gly of ubiquitin (a 76-residue protein attached to proteins as an intracellular targeting signal).. Recognizes and hydrolyzes the peptide bond at the C-terminal Gly of ubiquitin. Involved in the processing of poly-ubiquitin precursors as well as that of ubiquitinated proteins. Involved in salt tolerance by modulating sodium transport activity and repressing cell death at least partially through modulating SHM1 stability and activity. Involved in cadmium tolerance by interacting with HIPP27 and probably modulating its stability. In Arabidopsis thaliana (Mouse-ear cress), this protein is Ubiquitin carboxyl-terminal hydrolase 16 (UBP16).